The following is a 517-amino-acid chain: Cytochrome P450 monooxygenase polD (517 aa).

Residues 5 to 27 (VVLVGIVVLVLAYLSSTGKVYPH) form a helical membrane-spanning segment. C435 provides a ligand contact to heme.

The protein belongs to the cytochrome P450 family. It depends on heme as a cofactor.

The protein resides in the membrane. Functionally, cytochrome P450 monooxygenase; part of the gene cluster that mediates the biosynthesis of antifungal fernane-type triterpenoid polytolypin. PolD doe not seem to be involved in the biosynthesis of polytolypin. Within the pathway, the triterpene cyclase polA first catalyzes the cyclization of 2,3-oxidosqualene to motiol, polc converts the 4-alpha-methyl group of motiol to a carboxyl group, polB is responsible for appending a hydroxyl group at the 2-alpha position and polE is a dual functional P450, which can catalyze the formation of both the 1-beta-hydroxyl group and 10-beta-carboxyl group. This is Cytochrome P450 monooxygenase polD from Polytolypa hystricis (strain UAMH7299).